Consider the following 156-residue polypeptide: Small ribosomal subunit protein uS7 (156 aa).

It belongs to the universal ribosomal protein uS7 family. Part of the 30S ribosomal subunit. Contacts proteins S9 and S11.

One of the primary rRNA binding proteins, it binds directly to 16S rRNA where it nucleates assembly of the head domain of the 30S subunit. Is located at the subunit interface close to the decoding center, probably blocks exit of the E-site tRNA. The polypeptide is Small ribosomal subunit protein uS7 (Actinobacillus pleuropneumoniae serotype 5b (strain L20)).